Here is a 209-residue protein sequence, read N- to C-terminus: Somatotropin (209 aa).

An N-terminal signal peptide occupies residues 1-22 (MGQVFLLMPVLLVAGYLSLGAA). His-38 contributes to the Zn(2+) binding site. A disulfide bond links Cys-71 and Cys-182. Residue Glu-191 participates in Zn(2+) binding. Cysteines 199 and 207 form a disulfide.

Belongs to the somatotropin/prolactin family.

The protein localises to the secreted. In terms of biological role, growth hormone plays an important role in growth control and is involved in the regulation of several anabolic processes. Implicated as an osmoregulatory substance important for seawater adaptation. The chain is Somatotropin (gh) from Esox lucius (Northern pike).